We begin with the raw amino-acid sequence, 1422 residues long: DNA-directed RNA polymerase subunit beta (1422 aa).

The segment at 1392–1422 is disordered; the sequence is QAAREAAERDLGGGPLGAPRGAVASGEKSSA.

The protein belongs to the RNA polymerase beta chain family. In terms of assembly, the RNAP catalytic core consists of 2 alpha, 1 beta, 1 beta' and 1 omega subunit. When a sigma factor is associated with the core the holoenzyme is formed, which can initiate transcription.

The catalysed reaction is RNA(n) + a ribonucleoside 5'-triphosphate = RNA(n+1) + diphosphate. Its function is as follows. DNA-dependent RNA polymerase catalyzes the transcription of DNA into RNA using the four ribonucleoside triphosphates as substrates. The polypeptide is DNA-directed RNA polymerase subunit beta (Anaeromyxobacter dehalogenans (strain 2CP-C)).